Consider the following 120-residue polypeptide: PYEKIGAELVKEVAKKTDDVAGDGTTTATVLAQALVKEGLRNVAAGANPLGLKRGIEKAVEKVTQTLLSSAKDVETKEQIAATAGISAGDQSIGDLIAEAMDKVGNEGVITVEESNTFGL.

23 to 27 contributes to the ATP binding site; the sequence is DGTTT.

The protein belongs to the chaperonin (HSP60) family. As to quaternary structure, forms a cylinder of 14 subunits composed of two heptameric rings stacked back-to-back. Interacts with the co-chaperonin GroES.

The protein resides in the cytoplasm. It carries out the reaction ATP + H2O + a folded polypeptide = ADP + phosphate + an unfolded polypeptide.. In terms of biological role, together with its co-chaperonin GroES, plays an essential role in assisting protein folding. The GroEL-GroES system forms a nano-cage that allows encapsulation of the non-native substrate proteins and provides a physical environment optimized to promote and accelerate protein folding. This Mycobacterium asiaticum protein is Chaperonin GroEL.